We begin with the raw amino-acid sequence, 229 residues long: Demethylmenaquinone methyltransferase (229 aa).

S-adenosyl-L-methionine is bound by residues Thr57, Asp77, and 101–102 (DV).

Belongs to the class I-like SAM-binding methyltransferase superfamily. MenG/UbiE family.

The catalysed reaction is a 2-demethylmenaquinol + S-adenosyl-L-methionine = a menaquinol + S-adenosyl-L-homocysteine + H(+). It functions in the pathway quinol/quinone metabolism; menaquinone biosynthesis; menaquinol from 1,4-dihydroxy-2-naphthoate: step 2/2. In terms of biological role, methyltransferase required for the conversion of demethylmenaquinol (DMKH2) to menaquinol (MKH2). This Chlamydia trachomatis serovar A (strain ATCC VR-571B / DSM 19440 / HAR-13) protein is Demethylmenaquinone methyltransferase.